Consider the following 171-residue polypeptide: Adenine phosphoribosyltransferase (171 aa).

Belongs to the purine/pyrimidine phosphoribosyltransferase family. In terms of assembly, homodimer.

It localises to the cytoplasm. The catalysed reaction is AMP + diphosphate = 5-phospho-alpha-D-ribose 1-diphosphate + adenine. It participates in purine metabolism; AMP biosynthesis via salvage pathway; AMP from adenine: step 1/1. In terms of biological role, catalyzes a salvage reaction resulting in the formation of AMP, that is energically less costly than de novo synthesis. The polypeptide is Adenine phosphoribosyltransferase (Synechococcus sp. (strain ATCC 27144 / PCC 6301 / SAUG 1402/1) (Anacystis nidulans)).